The following is a 417-amino-acid chain: Paired box protein Pax-2 (417 aa).

The paired DNA-binding region spans 16–142 (GHGGVNQLGG…SSINRIIRTK (127 aa)). Positions 19-75 (GVNQLGGVFVNGRPLPDVVRQRIVELAHQGVRPCDISRQLRVSHGCVSKILGRYYET) are PAI subdomain. The RED subdomain stretch occupies residues 94–142 (KVVDKIAEYKRQNPTMFAWEIRDRLLAEGICDNDTVPSVSSINRIIRTK). Thr-226 is subject to Phosphothreonine. The tract at residues 304–325 (KSSLSASTNPELGSNVSGTQTY) is disordered. Positions 305–325 (SSLSASTNPELGSNVSGTQTY) are enriched in polar residues.

As to quaternary structure, interacts with ELGN3; the interaction targets PAX2 for destruction. Interacts with TLE4. As to expression, expressed in primitive cells of the kidney, ureter, eye, ear and central nervous system.

It is found in the nucleus. Transcription factor that may have a role in kidney cell differentiation. Has a critical role in the development of the urogenital tract, the eyes, and the CNS. This is Paired box protein Pax-2 (PAX2) from Homo sapiens (Human).